The primary structure comprises 483 residues: Probable cytochrome P450 517A1 (483 aa).

Residues 1 to 21 (MEIINVFLFLIILFLVKDFVK) traverse the membrane as a helical segment. A heme-binding site is contributed by cysteine 429.

It belongs to the cytochrome P450 family. The cofactor is heme.

It is found in the membrane. The chain is Probable cytochrome P450 517A1 (cyp517A1) from Dictyostelium discoideum (Social amoeba).